Consider the following 142-residue polypeptide: Hemoglobin subunit alpha-A (142 aa).

One can recognise a Globin domain in the interval 2–142; it reads VLSANDKTNV…VGNVLTAKYR (141 aa). Histidine 59 provides a ligand contact to O2. Histidine 88 serves as a coordination point for heme b.

The protein belongs to the globin family. Heterotetramer of two alpha chains and two beta chains. As to expression, red blood cells.

Its function is as follows. Involved in oxygen transport from the lung to the various peripheral tissues. This Aquila chrysaetos (Golden eagle) protein is Hemoglobin subunit alpha-A (HBAA).